The primary structure comprises 111 residues: Small ribosomal subunit protein bS18 (111 aa).

The tract at residues 1-32 is disordered; it reads MDLENTENVENNNNNEEEVKAKGERKAHFNKE. Residues 17–32 show a composition bias toward basic and acidic residues; it reads EEVKAKGERKAHFNKE.

Belongs to the bacterial ribosomal protein bS18 family. In terms of assembly, part of the 30S ribosomal subunit. Forms a tight heterodimer with protein bS6.

Binds as a heterodimer with protein bS6 to the central domain of the 16S rRNA, where it helps stabilize the platform of the 30S subunit. This chain is Small ribosomal subunit protein bS18, found in Brachyspira hyodysenteriae (strain ATCC 49526 / WA1).